The following is a 470-amino-acid chain: Acetyl-CoA decarbonylase/synthase complex subunit gamma 1 (470 aa).

Residues 1-60 (MKINSPLEAYKYLPQTNCGECGQPTCMAFASTLIDRSGKTTDCPPLIKEKKFAKKLAELD) enclose the 4Fe-4S domain. 4 residues coordinate [4Fe-4S] cluster: C18, C21, C26, and C43.

Heterodimer of delta and gamma chains. The ACDS complex is made up of alpha, epsilon, beta, gamma and delta chains with a probable stoichiometry of (alpha(2)epsilon(2))(4)-beta(8)-(gamma(1)delta(1))(8). Corrinoid serves as cofactor. [4Fe-4S] cluster is required as a cofactor.

The catalysed reaction is 5,6,7,8-tetrahydrosarcinapterin + methyl-Co(III)-[corrinoid Fe-S protein] = 5-methyltetrahydrosarcinapterin + Co(I)-[corrinoid Fe-S protein] + H(+). Its pathway is one-carbon metabolism; methanogenesis from acetate. Part of a complex that catalyzes the reversible cleavage of acetyl-CoA, allowing growth on acetate as sole source of carbon and energy. In Methanosarcina mazei (strain ATCC BAA-159 / DSM 3647 / Goe1 / Go1 / JCM 11833 / OCM 88) (Methanosarcina frisia), this protein is Acetyl-CoA decarbonylase/synthase complex subunit gamma 1.